The chain runs to 2924 residues: Probable polyketide synthase 6 (2924 aa).

The Ketosynthase family 3 (KS3) domain occupies 11–442; the sequence is EKGVAIVGIG…GSNCCLLISE (432 aa). Catalysis depends on for beta-ketoacyl synthase activity residues Cys181, His323, and His362. The tract at residues 635–668 is acyl/malonyl transferase; the sequence is GVNPSFILGHSLGEISASYCSGMIDLDTFCYTVY. The For acyl/malonyl transferase activity role is filled by Ser645. The tract at residues 925–1047 is N-terminal hotdog fold; sequence IDHLGLSNSY…SNFQLLDHGN (123 aa). One can recognise a PKS/mFAS DH domain in the interval 925–1210; sequence IDHLGLSNSY…CKSLIPIKDS (286 aa). His959 functions as the Proton acceptor; for dehydratase activity in the catalytic mechanism. The C-terminal hotdog fold stretch occupies residues 1064-1210; the sequence is NLSKLTKNEL…CKSLIPIKDS (147 aa). The Proton donor; for dehydratase activity role is filled by Asp1122. Residues 2431-2508 form the Carrier domain; sequence TGNKNIDELF…ISIKMILNSL (78 aa). O-(pantetheine 4'-phosphoryl)serine is present on Ser2468. Residues 2551–2571 traverse the membrane as a helical segment; that stretch reads KIILLTGTTGFLGGFLLFNML.

Requires pantetheine 4'-phosphate as cofactor.

It localises to the membrane. Probable polyketide synthase. This is Probable polyketide synthase 6 (pks6) from Dictyostelium discoideum (Social amoeba).